Here is a 513-residue protein sequence, read N- to C-terminus: Xylose import ATP-binding protein XylG (513 aa).

ABC transporter domains lie at 5–242 (LEMK…VGRE) and 259–505 (LRIE…LRSE). 37-44 (GENGSGKS) contributes to the ATP binding site.

Belongs to the ABC transporter superfamily. Xylose importer (TC 3.A.1.2.4) family. In terms of assembly, the complex is composed of two ATP-binding proteins (XylG), two transmembrane proteins (XylH) and a solute-binding protein (XylF).

Its subcellular location is the cell inner membrane. It carries out the reaction D-xylose(out) + ATP + H2O = D-xylose(in) + ADP + phosphate + H(+). In terms of biological role, part of the ABC transporter complex XylFGH involved in xylose import. Responsible for energy coupling to the transport system. The polypeptide is Xylose import ATP-binding protein XylG (Shigella boydii serotype 4 (strain Sb227)).